We begin with the raw amino-acid sequence, 58 residues long: Large ribosomal subunit protein bL32 (58 aa).

The protein belongs to the bacterial ribosomal protein bL32 family.

The polypeptide is Large ribosomal subunit protein bL32 (Ligilactobacillus salivarius (strain UCC118) (Lactobacillus salivarius)).